A 37-amino-acid chain; its full sequence is Large ribosomal subunit protein bL36 (37 aa).

It belongs to the bacterial ribosomal protein bL36 family.

The chain is Large ribosomal subunit protein bL36 from Pasteurella multocida (strain Pm70).